Consider the following 582-residue polypeptide: Putative G-protein coupled receptor B0244.10 (582 aa).

4 helical membrane passes run 25–45 (LYII…PLGL), 70–90 (ITFS…GFAV), 120–140 (WTFF…GLVI), and 159–179 (LLVQ…VFLT). N-linked (GlcNAc...) asparagine glycosylation occurs at asparagine 190. A helical membrane pass occupies residues 199–218 (LTLGKWFIALYRFLFQMTNI). N-linked (GlcNAc...) asparagine glycosylation is found at asparagine 221 and asparagine 237. 5 helical membrane passes run 253–273 (SLMI…AVLV), 296–316 (YIFV…IIII), 329–349 (TFAF…SLLG), 377–397 (IYII…PFGL), and 421–441 (WLLF…LLFV). A glycan (N-linked (GlcNAc...) asparagine) is linked at asparagine 457. Transmembrane regions (helical) follow at residues 475–495 (TILV…AAFG) and 513–533 (LIFP…TFLL). Asparagine 538 carries an N-linked (GlcNAc...) asparagine glycan.

The protein belongs to the G-protein coupled receptor 1 family. B0244 subfamily.

Its subcellular location is the cell membrane. The polypeptide is Putative G-protein coupled receptor B0244.10 (Caenorhabditis elegans).